A 110-amino-acid chain; its full sequence is NADH dehydrogenase [ubiquinone] iron-sulfur protein 6, mitochondrial (110 aa).

Residues 1-22 (MASNLLKALIRSQILPSSRRNF) constitute a mitochondrion transit peptide.

Belongs to the complex I NDUFS6 subunit family. Complex I is composed of at least 49 different subunits. This is a component of the iron-sulfur (IP) fragment of the enzyme.

It is found in the mitochondrion inner membrane. Its function is as follows. Accessory subunit of the mitochondrial membrane respiratory chain NADH dehydrogenase (Complex I), that is believed not to be involved in catalysis. Complex I functions in the transfer of electrons from NADH to the respiratory chain. The immediate electron acceptor for the enzyme is believed to be ubiquinone. This chain is NADH dehydrogenase [ubiquinone] iron-sulfur protein 6, mitochondrial, found in Arabidopsis thaliana (Mouse-ear cress).